Reading from the N-terminus, the 147-residue chain is Small ribosomal subunit protein bS6 (147 aa).

Residues 107 to 147 form a disordered region; that stretch reads KEGRERKARPARAERRDDTEAEDLSDEEGVEAEDFEEEQGV. The segment covering 125 to 147 has biased composition (acidic residues); the sequence is TEAEDLSDEEGVEAEDFEEEQGV.

Belongs to the bacterial ribosomal protein bS6 family.

Its function is as follows. Binds together with bS18 to 16S ribosomal RNA. This chain is Small ribosomal subunit protein bS6, found in Cellvibrio japonicus (strain Ueda107) (Pseudomonas fluorescens subsp. cellulosa).